We begin with the raw amino-acid sequence, 257 residues long: Diphthine synthase (257 aa).

Residues L9, D83, M86, S111–I112, and I163 each bind S-adenosyl-L-methionine.

This sequence belongs to the diphthine synthase family. In terms of assembly, homodimer.

The enzyme catalyses 2-[(3S)-amino-3-carboxypropyl]-L-histidyl-[translation elongation factor 2] + 3 S-adenosyl-L-methionine = diphthine-[translation elongation factor 2] + 3 S-adenosyl-L-homocysteine + 3 H(+). The protein operates within protein modification; peptidyl-diphthamide biosynthesis. S-adenosyl-L-methionine-dependent methyltransferase that catalyzes the trimethylation of the amino group of the modified target histidine residue in translation elongation factor 2 (EF-2), to form an intermediate called diphthine. The three successive methylation reactions represent the second step of diphthamide biosynthesis. This is Diphthine synthase from Thermoplasma acidophilum (strain ATCC 25905 / DSM 1728 / JCM 9062 / NBRC 15155 / AMRC-C165).